We begin with the raw amino-acid sequence, 221 residues long: Very-long-chain (3R)-3-hydroxyacyl-CoA dehydratase PASTICCINO 2B (221 aa).

Topologically, residues 1–11 are cytoplasmic; it reads MTGVGSAVRRL. Residues 12–32 form a helical membrane-spanning segment; the sequence is YLSVYNWAVFFGWAQVLYYAV. Residues 33–51 lie on the Lumenal side of the membrane; that stretch reads TTLLESGHEAVYAAVERPL. Residues 52-70 form a helical membrane-spanning segment; it reads QFAQTAAFLEILHGLVGLV. Over 71–76 the chain is Cytoplasmic; sequence RSPVSA. Residues 77 to 95 traverse the membrane as a helical segment; sequence TLPQIGSRLFLTWGILWSF. Topologically, residues 96 to 100 are lumenal; it reads PETHS. The helical transmembrane segment at 101–121 threads the bilayer; the sequence is HILVTSLVISWSITEIIRYSF. The Cytoplasmic segment spans residues 122–141; sequence FGMKETFGFAPSWLLWLRYS. A helical membrane pass occupies residues 142-165; that stretch reads TFMVLYPTGISSEVGLIYIALPYM. Catalysis depends on residues Tyr-147 and Glu-154. Residues 166–184 lie on the Lumenal side of the membrane; it reads KATEKYCLRMPNKWNFSFD. Residues 185–209 traverse the membrane as a helical segment; sequence FSYASILSLAVYVPGSPHMFTYMLA. The Cytoplasmic segment spans residues 210-221; that stretch reads QRKKALAKAKAA.

Belongs to the very long-chain fatty acids dehydratase HACD family.

Its subcellular location is the endoplasmic reticulum membrane. The enzyme catalyses a very-long-chain (3R)-3-hydroxyacyl-CoA = a very-long-chain (2E)-enoyl-CoA + H2O. Its pathway is lipid metabolism; fatty acid biosynthesis. Catalyzes the third of the four reactions of the long-chain fatty acids elongation cycle. This endoplasmic reticulum-bound enzymatic process, allows the addition of two carbons to the chain of long- and very long-chain fatty acids/VLCFAs per cycle. This enzyme catalyzes the dehydration of the 3-hydroxyacyl-CoA intermediate into trans-2,3-enoyl-CoA, within each cycle of fatty acid elongation. Thereby, it participates in the production of VLCFAs of different chain lengths that are involved in multiple biological processes as precursors of membrane lipids and lipid mediators. May be an anti-phosphatase that prevents CDKA-1 dephosphorylation and activation. Involved in the hormonal control of cell division and differentiation. Required for proliferation control of meristematic and non-meristematic cells. Negative regulator of the cell cycle. This chain is Very-long-chain (3R)-3-hydroxyacyl-CoA dehydratase PASTICCINO 2B (PAS2B), found in Oryza sativa subsp. japonica (Rice).